We begin with the raw amino-acid sequence, 467 residues long: Dimethylamine methyltransferase MtbB1 (467 aa).

Position 356 (Pyl-356) is a non-standard amino acid, pyrrolysine.

Belongs to the dimethylamine methyltransferase family. As to quaternary structure, may form homotetramers or homopentamers.

It carries out the reaction Co(I)-[dimethylamine-specific corrinoid protein] + dimethylamine + H(+) = methyl-Co(III)-[dimethylamine-specific corrinoid protein] + methylamine. Its pathway is one-carbon metabolism; methanogenesis from dimethylamine. Its function is as follows. Catalyzes the transfer of a methyl group from dimethylamine to the corrinoid cofactor of MtbC. The major or perhaps only DMA methyltransferase expressed under inducing conditions. In Methanosarcina barkeri, this protein is Dimethylamine methyltransferase MtbB1.